The chain runs to 147 residues: Large ribosomal subunit protein uL15 (147 aa).

The disordered stretch occupies residues 1 to 57 (MDLSNLSPAPGSTKARKRLGRGPGSGNGTTAGRGNKGHNSRSGGGVRPGFEGGQMPL). Composition is skewed to gly residues over residues 21–31 (RGPGSGNGTTA) and 42–52 (SGGGVRPGFEG).

This sequence belongs to the universal ribosomal protein uL15 family. In terms of assembly, part of the 50S ribosomal subunit.

Functionally, binds to the 23S rRNA. This Desulfosudis oleivorans (strain DSM 6200 / JCM 39069 / Hxd3) (Desulfococcus oleovorans) protein is Large ribosomal subunit protein uL15.